The sequence spans 206 residues: 2,3-bisphosphoglycerate-dependent phosphoglycerate mutase (206 aa).

Substrate contacts are provided by residues 9 to 16 (RHGQSEWN), 22 to 23 (TG), Arg61, 88 to 91 (ERDY), Lys99, 115 to 116 (RR), and 159 to 160 (GN). The active-site Tele-phosphohistidine intermediate is His10. Catalysis depends on Glu88, which acts as the Proton donor/acceptor.

Belongs to the phosphoglycerate mutase family. BPG-dependent PGAM subfamily. Homodimer.

The enzyme catalyses (2R)-2-phosphoglycerate = (2R)-3-phosphoglycerate. It participates in carbohydrate degradation; glycolysis; pyruvate from D-glyceraldehyde 3-phosphate: step 3/5. Its function is as follows. Catalyzes the interconversion of 2-phosphoglycerate and 3-phosphoglycerate. The chain is 2,3-bisphosphoglycerate-dependent phosphoglycerate mutase from Bartonella bacilliformis (strain ATCC 35685 / KC583 / Herrer 020/F12,63).